The chain runs to 506 residues: Chaperone SurA (506 aa).

The signal sequence occupies residues 1–29 (MMRRLHSSRRFSGSLLALALGLALPLAHA). PpiC domains follow at residues 219–320 (PVML…KVLQ) and 351–450 (VTQT…QVLE).

It localises to the periplasm. The enzyme catalyses [protein]-peptidylproline (omega=180) = [protein]-peptidylproline (omega=0). Chaperone involved in the correct folding and assembly of outer membrane proteins. Recognizes specific patterns of aromatic residues and the orientation of their side chains, which are found more frequently in integral outer membrane proteins. May act in both early periplasmic and late outer membrane-associated steps of protein maturation. The sequence is that of Chaperone SurA from Bordetella avium (strain 197N).